Reading from the N-terminus, the 757-residue chain is Mitofusin-2 (757 aa).

Over 1-604 the chain is Cytoplasmic; sequence MSLLFSRCNS…TQEELMVSMV (604 aa). The segment at 30-94 is part of a helix bundle domain, formed by helices from N-terminal and C-terminal regions; sequence KHFVTAKKKI…VRGISEVLAR (65 aa). Positions 93 to 342 constitute a Dynamin-type G domain; that stretch reads ARRHMKVAFF…VRMFEFQNFE (250 aa). The tract at residues 103–110 is G1 motif; sequence GRTSNGKS. 106–111 contacts GTP; the sequence is SNGKST. A Phosphothreonine; by PINK1 modification is found at Thr-111. The interval 129–130 is G2 motif; that stretch reads TT. Residues 199–202 are G3 motif; it reads DSPG. 258–261 contributes to the GTP binding site; that stretch reads NRWD. The tract at residues 258 to 261 is G4 motif; the sequence is NRWD. Residue Glu-288 is a region of interest, G5 motif. GTP is bound by residues Ser-305 and Lys-307. The part of a helix bundle domain, formed by helices from N-terminal and C-terminal regions stretch occupies residues 359 to 385; that stretch reads EQHTVRAKQIAEAVRLIMDSLHIAAQE. Residues 406 to 434 are a coiled coil; sequence KQLELLAQDYKLRIKQITEEVERQVSTAM. Ser-442 carries the phosphoserine modification. The helical transmembrane segment at 605–625 threads the bilayer; the sequence is TGLASLTSRTSMGILVVGGVV. A topological domain (mitochondrial intermembrane) is located at residue Trp-626. A helical transmembrane segment spans residues 627 to 647; it reads KAVGWRLIALSFGLYGLLYVY. The Cytoplasmic portion of the chain corresponds to 648–757; it reads ERLTWTTKAK…FTHQYLQPSR (110 aa). The stretch at 696-738 forms a coiled coil; it reads FAHLCQQVDITRDNLEQEIAAMNKKVEALDSLQSRAKLLRNKA. The segment at 722 to 753 is part of a helix bundle domain, formed by helices from N-terminal and C-terminal regions; it reads EALDSLQSRAKLLRNKAGWLDSELNMFTHQYL.

It belongs to the TRAFAC class dynamin-like GTPase superfamily. Dynamin/Fzo/YdjA family. Mitofusin subfamily. As to quaternary structure, forms homomultimers and heteromultimers with MFN1. Oligomerization is essential for mitochondrion fusion. Interacts with VAT1. Interacts with STOML2; may form heterooligomers. Interacts (phosphorylated) with PRKN. Interacts with EIF2AK3. Interacts with THG1L; THG1L probably functions as a guanyl-nucleotide exchange factor/GEF, activating MFN2. Phosphorylated by PINK1. In terms of processing, ubiquitinated by non-degradative ubiquitin by PRKN, promoting mitochondrial fusion; deubiquitination by USP30 inhibits mitochondrial fusion. Ubiquitinated by HUWE1 when dietary stearate (C18:0) levels are low; ubiquitination inhibits mitochondrial fusion. In terms of tissue distribution, ubiquitous. Expression is markedly reduced in ApoE-knockout mouse atherosclerotic arteries.

It localises to the mitochondrion outer membrane. It catalyses the reaction GTP + H2O = GDP + phosphate + H(+). Functionally, mitochondrial outer membrane GTPase that mediates mitochondrial clustering and fusion. Mitochondria are highly dynamic organelles, and their morphology is determined by the equilibrium between mitochondrial fusion and fission events. Overexpression induces the formation of mitochondrial networks. Membrane clustering requires GTPase activity and may involve a major rearrangement of the coiled coil domains. Plays a central role in mitochondrial metabolism and may be associated with obesity and/or apoptosis processes. Plays an important role in the regulation of vascular smooth muscle cell proliferation. Involved in the clearance of damaged mitochondria via selective autophagy (mitophagy). Is required for PRKN recruitment to dysfunctional mitochondria. Involved in the control of unfolded protein response (UPR) upon ER stress including activation of apoptosis and autophagy during ER stress. Acts as an upstream regulator of EIF2AK3 and suppresses EIF2AK3 activation under basal conditions. The polypeptide is Mitofusin-2 (Mfn2) (Mus musculus (Mouse)).